A 319-amino-acid polypeptide reads, in one-letter code: Carboxylesterase NlhH (319 aa).

The Involved in the stabilization of the negatively charged intermediate by the formation of the oxyanion hole motif lies at 88-90; sequence HGG. Catalysis depends on residues serine 162, aspartate 260, and histidine 290.

It belongs to the 'GDXG' lipolytic enzyme family. In terms of assembly, monomer.

The catalysed reaction is a carboxylic ester + H2O = an alcohol + a carboxylate + H(+). Its function is as follows. Hydrolyzes various short-chain esters. The polypeptide is Carboxylesterase NlhH (nlhH) (Mycobacterium tuberculosis (strain CDC 1551 / Oshkosh)).